The sequence spans 944 residues: Protein unc-45 homolog A (944 aa).

The disordered stretch occupies residues 1 to 25 (MTVSGPGTPEPRPSDPGASSAEELR). TPR repeat units lie at residues 21–54 (AEEL…GATP), 58–91 (AILH…DGGD), and 92–125 (VKAL…EPKN). Lys70 is modified (N6-acetyllysine). An N6-acetyllysine modification is found at Lys483.

As to quaternary structure, interacts with PGR isoforms A and B as well as with NR3C1 in the absence of ligand, and with HSP90AB1. Binding to HSP90AB1 involves 2 UNC45A monomers per HSP90AB1 dimer.

Its subcellular location is the cytoplasm. The protein resides in the perinuclear region. It localises to the nucleus. In terms of biological role, may act as co-chaperone for HSP90 (Potential). Prevents the stimulation of HSP90AB1 ATPase activity by AHSA1. Positive factor in promoting PGR function in the cell. May be necessary for proper folding of myosin (Potential). Necessary for normal cell proliferation. Necessary for normal myotube formation and myosin accumulation during muscle cell development. May play a role in erythropoiesis in stroma cells in the spleen. In Rattus norvegicus (Rat), this protein is Protein unc-45 homolog A (Unc45a).